We begin with the raw amino-acid sequence, 334 residues long: ADP-L-glycero-D-manno-heptose-6-epimerase (334 aa).

NADP(+)-binding positions include 11–12 (FI), 32–33 (DN), Lys39, Lys54, 77–81 (QGACS), and Asn94. Tyr141 functions as the Proton acceptor in the catalytic mechanism. Position 145 (Lys145) interacts with NADP(+). Substrate is bound at residue Asn171. Val172 and Lys180 together coordinate NADP(+). Residue Lys180 is the Proton acceptor of the active site. Residues Arg182, His189, 203–206 (FGSN), Arg216, and Tyr295 contribute to the substrate site.

Belongs to the NAD(P)-dependent epimerase/dehydratase family. HldD subfamily. In terms of assembly, homopentamer. The cofactor is NADP(+).

It carries out the reaction ADP-D-glycero-beta-D-manno-heptose = ADP-L-glycero-beta-D-manno-heptose. It functions in the pathway nucleotide-sugar biosynthesis; ADP-L-glycero-beta-D-manno-heptose biosynthesis; ADP-L-glycero-beta-D-manno-heptose from D-glycero-beta-D-manno-heptose 7-phosphate: step 4/4. Its pathway is bacterial outer membrane biogenesis; LOS core biosynthesis. In terms of biological role, catalyzes the interconversion between ADP-D-glycero-beta-D-manno-heptose and ADP-L-glycero-beta-D-manno-heptose via an epimerization at carbon 6 of the heptose. This chain is ADP-L-glycero-D-manno-heptose-6-epimerase, found in Neisseria gonorrhoeae.